An 87-amino-acid chain; its full sequence is Large ribosomal subunit protein bL27 (87 aa).

The disordered stretch occupies residues 1–21 (MAHKKGGGSTRNGRDSASKRL).

Belongs to the bacterial ribosomal protein bL27 family.

In Amoebophilus asiaticus (strain 5a2), this protein is Large ribosomal subunit protein bL27.